The chain runs to 492 residues: Lysine--tRNA ligase (492 aa).

Mg(2+) contacts are provided by Asp-395 and Glu-402.

The protein belongs to the class-II aminoacyl-tRNA synthetase family. In terms of assembly, homodimer. Mg(2+) is required as a cofactor.

The protein resides in the cytoplasm. It carries out the reaction tRNA(Lys) + L-lysine + ATP = L-lysyl-tRNA(Lys) + AMP + diphosphate. In Thermus thermophilus (strain ATCC BAA-163 / DSM 7039 / HB27), this protein is Lysine--tRNA ligase.